The chain runs to 397 residues: Putative gustatory receptor 93c (397 aa).

The Cytoplasmic portion of the chain corresponds to 1–12 (MIERLKKVSLPA). The helical transmembrane segment at 13–33 (LSAFILFCSCHYGRILGVICF) threads the bilayer. The Extracellular portion of the chain corresponds to 34 to 87 (DIGQRTSDDSLVVRNRHQFKWFCLSCRLISVTAVCCFCAPYVADIEDPYERLLQ). Residues 88–108 (CFRLSASLICGICIIVVQVCY) traverse the membrane as a helical segment. Residues 109 to 141 (EKELLRMIISFLRLFRRVRRLSSLKRIGFGGKR) lie on the Cytoplasmic side of the membrane. Residues 142–162 (EFFLLLFKFICLVYELYSEIC) form a helical membrane-spanning segment. Residues 163–179 (QLWHLPDSLSLFATLCE) are Extracellular-facing. The chain crosses the membrane as a helical span at residues 180-200 (IFLEIGSLMIIHIGFVGYLSV). Over 201–266 (AALYSEVNSF…RTFHRLLELP (66 aa)) the chain is Cytoplasmic. Residues 267–287 (VLIILLGKIFATTILSYEVII) traverse the membrane as a helical segment. The Extracellular segment spans residues 288–295 (RPELYARK). The chain crosses the membrane as a helical span at residues 296–316 (IGMWGLVVKSFADVILLTLAV). Residues 317–371 (HEAVSSSRMMRRLSLENFPITDHKAWHMKWEMFLSRLNFFEFRVRPLGLFEVSNE) lie on the Cytoplasmic side of the membrane. A helical membrane pass occupies residues 372 to 392 (VILLFLSSMITYFTYVVQYGI). At 393 to 397 (QTNRL) the chain is on the extracellular side.

This sequence belongs to the insect chemoreceptor superfamily. Gustatory receptor (GR) family. Gr93a subfamily. As to expression, in larvae, is expressed in neurons of the posterior pharyngeal sense organ.

It is found in the cell membrane. Functionally, probable gustatory receptor which mediates acceptance or avoidance behavior, depending on its substrates. The sequence is that of Putative gustatory receptor 93c (Gr93c) from Drosophila melanogaster (Fruit fly).